The following is a 344-amino-acid chain: N-acetyl-gamma-glutamyl-phosphate reductase (344 aa).

Residue Cys150 is part of the active site.

Belongs to the NAGSA dehydrogenase family. Type 1 subfamily.

It localises to the cytoplasm. It carries out the reaction N-acetyl-L-glutamate 5-semialdehyde + phosphate + NADP(+) = N-acetyl-L-glutamyl 5-phosphate + NADPH + H(+). It participates in amino-acid biosynthesis; L-arginine biosynthesis; N(2)-acetyl-L-ornithine from L-glutamate: step 3/4. Its function is as follows. Catalyzes the NADPH-dependent reduction of N-acetyl-5-glutamyl phosphate to yield N-acetyl-L-glutamate 5-semialdehyde. This Pseudomonas putida (strain ATCC 700007 / DSM 6899 / JCM 31910 / BCRC 17059 / LMG 24140 / F1) protein is N-acetyl-gamma-glutamyl-phosphate reductase.